Consider the following 162-residue polypeptide: Phycoerythrocyanin alpha chain (162 aa).

Cys84 contacts (15Z)-phycoviolobilin.

It belongs to the phycobiliprotein family. Heterodimer of an alpha and a beta chain. Contains one covalently linked bilin chromophore.

The protein resides in the cellular thylakoid membrane. In terms of biological role, light-harvesting photosynthetic bile pigment-protein from the phycobiliprotein complex. This Nostoc sp. (strain PCC 7120 / SAG 25.82 / UTEX 2576) protein is Phycoerythrocyanin alpha chain (pecA).